We begin with the raw amino-acid sequence, 141 residues long: Large ribosomal subunit protein uL11 (141 aa).

It belongs to the universal ribosomal protein uL11 family. Part of the ribosomal stalk of the 50S ribosomal subunit. Interacts with L10 and the large rRNA to form the base of the stalk. L10 forms an elongated spine to which L12 dimers bind in a sequential fashion forming a multimeric L10(L12)X complex. One or more lysine residues are methylated.

Functionally, forms part of the ribosomal stalk which helps the ribosome interact with GTP-bound translation factors. In Agathobacter rectalis (strain ATCC 33656 / DSM 3377 / JCM 17463 / KCTC 5835 / VPI 0990) (Eubacterium rectale), this protein is Large ribosomal subunit protein uL11.